The chain runs to 98 residues: NADH-ubiquinone oxidoreductase chain 4L (98 aa).

3 helical membrane passes run 1–21, 29–49, and 61–81; these read MTMVYANIFLAFITSLMGLLM, SLLCLEGMMLSLFVMMTITIL, and IILLVFAACEAALGLSLLVMV.

This sequence belongs to the complex I subunit 4L family. As to quaternary structure, core subunit of respiratory chain NADH dehydrogenase (Complex I) which is composed of 45 different subunits.

It is found in the mitochondrion inner membrane. The enzyme catalyses a ubiquinone + NADH + 5 H(+)(in) = a ubiquinol + NAD(+) + 4 H(+)(out). Its function is as follows. Core subunit of the mitochondrial membrane respiratory chain NADH dehydrogenase (Complex I) which catalyzes electron transfer from NADH through the respiratory chain, using ubiquinone as an electron acceptor. Part of the enzyme membrane arm which is embedded in the lipid bilayer and involved in proton translocation. The protein is NADH-ubiquinone oxidoreductase chain 4L (MT-ND4L) of Ommatophoca rossii (Ross seal).